We begin with the raw amino-acid sequence, 177 residues long: Translation initiation factor IF-3 (177 aa).

Belongs to the IF-3 family. In terms of assembly, monomer.

It localises to the cytoplasm. Functionally, IF-3 binds to the 30S ribosomal subunit and shifts the equilibrium between 70S ribosomes and their 50S and 30S subunits in favor of the free subunits, thus enhancing the availability of 30S subunits on which protein synthesis initiation begins. This chain is Translation initiation factor IF-3, found in Nostoc punctiforme (strain ATCC 29133 / PCC 73102).